The primary structure comprises 416 residues: Imidazolonepropionase (416 aa).

Positions 78 and 80 each coordinate Fe(3+). Zn(2+) is bound by residues histidine 78 and histidine 80. 4-imidazolone-5-propanoate-binding residues include arginine 87, tyrosine 150, and histidine 183. Tyrosine 150 is a binding site for N-formimidoyl-L-glutamate. Histidine 248 contacts Fe(3+). Histidine 248 serves as a coordination point for Zn(2+). Residue glutamine 251 participates in 4-imidazolone-5-propanoate binding. Fe(3+) is bound at residue aspartate 323. Aspartate 323 contacts Zn(2+). 2 residues coordinate N-formimidoyl-L-glutamate: asparagine 325 and glycine 327. Residue threonine 328 coordinates 4-imidazolone-5-propanoate.

It belongs to the metallo-dependent hydrolases superfamily. HutI family. The cofactor is Zn(2+). Requires Fe(3+) as cofactor.

The protein localises to the cytoplasm. The enzyme catalyses 4-imidazolone-5-propanoate + H2O = N-formimidoyl-L-glutamate. It participates in amino-acid degradation; L-histidine degradation into L-glutamate; N-formimidoyl-L-glutamate from L-histidine: step 3/3. Its function is as follows. Catalyzes the hydrolytic cleavage of the carbon-nitrogen bond in imidazolone-5-propanoate to yield N-formimidoyl-L-glutamate. It is the third step in the universal histidine degradation pathway. This is Imidazolonepropionase from Vibrio parahaemolyticus serotype O3:K6 (strain RIMD 2210633).